The chain runs to 196 residues: Protein GrpE (196 aa).

The segment covering 1 to 26 has biased composition (basic and acidic residues); the sequence is MQEPHNQEPIEEQKLSEMEDTLEKQH. The interval 1–40 is disordered; it reads MQEPHNQEPIEEQKLSEMEDTLEKQHSGASTENTERAEEG.

This sequence belongs to the GrpE family. Homodimer.

The protein resides in the cytoplasm. Participates actively in the response to hyperosmotic and heat shock by preventing the aggregation of stress-denatured proteins, in association with DnaK and GrpE. It is the nucleotide exchange factor for DnaK and may function as a thermosensor. Unfolded proteins bind initially to DnaJ; upon interaction with the DnaJ-bound protein, DnaK hydrolyzes its bound ATP, resulting in the formation of a stable complex. GrpE releases ADP from DnaK; ATP binding to DnaK triggers the release of the substrate protein, thus completing the reaction cycle. Several rounds of ATP-dependent interactions between DnaJ, DnaK and GrpE are required for fully efficient folding. The chain is Protein GrpE from Nitrosomonas eutropha (strain DSM 101675 / C91 / Nm57).